The following is a 156-amino-acid chain: Transcriptional repressor NrdR (156 aa).

Residues 3–34 (CPYCGHLDNKVIDSRINKDATITRRRRSCLAC) fold into a zinc finger. The ATP-cone domain maps to 49–139 (PMLVKKDGRR…VYRQFKDVDE (91 aa)).

It belongs to the NrdR family. Zn(2+) serves as cofactor.

Its function is as follows. Negatively regulates transcription of bacterial ribonucleotide reductase nrd genes and operons by binding to NrdR-boxes. The sequence is that of Transcriptional repressor NrdR from Desulfotalea psychrophila (strain LSv54 / DSM 12343).